We begin with the raw amino-acid sequence, 676 residues long: MSKVYELVSEYQPSGDQPTAIKQLLEGLDAGLAHQTLLGVTGSGKTFTLANVIAQAQRPAILLAPNKTLAAQLYGEMKSFFPNNAVEYFVSYYDYYQPEAYVPTTDTFIEKDASVNAHIEQMRLSATKALLERKDAIIVASVSAIYGLGDPESYLQMMLHLRRGDVIDQRDMLRRLAELQYSRNDVAFERGQFRVRGEVIDIFPAESDQDAVRVEMFDDEVDCISVFDPLTGVVKQRDLPRYTIYPKTHYVTPRDRILEAIESIKVELEVRKKQLLENNKLIEEQRISQRTQFDIEMMNELGFCSGIENYSRYLSGRSEGEPPPTLFDYLPHDGLLIIDESHVTVPQIGAMYKGDRSRKETLVEFGFRLPSALDNRPLKFEEFESLAPQTIFVSATPGNYELEKSAGEIADQVVRPTGLLDPILEVRPVATQVDDLLSEIRIRAAKEERVLVTTLTKRMAEDLTEYLHEHDVRVRYLHSDIDTVERVEIIRDLRLGEFDVLVGINLLREGLDMPEVSLVAILDADKEGFLRSERSLIQTIGRAARNIEGKAILYADNITKSMKKAMDETNRRREKQQAYNEKMGITPQALKRNIKDIMELGDITKSKRQRNTKQVPLSKVAEPSQTYEVMSPQQLEKEISRLEAAMYQHAQDLEFELAAEKRDEIEKLRAQFIANS.

The region spanning 26-414 is the Helicase ATP-binding domain; that stretch reads EGLDAGLAHQ…SAGEIADQVV (389 aa). ATP is bound at residue 39 to 46; the sequence is GVTGSGKT. The Beta-hairpin motif lies at 92-115; sequence YYDYYQPEAYVPTTDTFIEKDASV. In terms of domain architecture, Helicase C-terminal spans 432–598; the sequence is QVDDLLSEIR…ALKRNIKDIM (167 aa). The 36-residue stretch at 636 to 671 folds into the UVR domain; it reads EKEISRLEAAMYQHAQDLEFELAAEKRDEIEKLRAQ.

Belongs to the UvrB family. As to quaternary structure, forms a heterotetramer with UvrA during the search for lesions. Interacts with UvrC in an incision complex.

The protein localises to the cytoplasm. Functionally, the UvrABC repair system catalyzes the recognition and processing of DNA lesions. A damage recognition complex composed of 2 UvrA and 2 UvrB subunits scans DNA for abnormalities. Upon binding of the UvrA(2)B(2) complex to a putative damaged site, the DNA wraps around one UvrB monomer. DNA wrap is dependent on ATP binding by UvrB and probably causes local melting of the DNA helix, facilitating insertion of UvrB beta-hairpin between the DNA strands. Then UvrB probes one DNA strand for the presence of a lesion. If a lesion is found the UvrA subunits dissociate and the UvrB-DNA preincision complex is formed. This complex is subsequently bound by UvrC and the second UvrB is released. If no lesion is found, the DNA wraps around the other UvrB subunit that will check the other stand for damage. The sequence is that of UvrABC system protein B from Vibrio parahaemolyticus serotype O3:K6 (strain RIMD 2210633).